The chain runs to 1365 residues: Polyprotein ABA-1 (1365 aa).

It belongs to the NPA family. Nematode polyprotein allergens (NPAs) are synthesized as large polypeptides that are subsequently proteolytically cleaved to active polypeptide units. In terms of tissue distribution, pseudocoelomic fluid.

Has high binding affinity for fatty acids and retinoids. In Ascaris suum (Pig roundworm), this protein is Polyprotein ABA-1 (ABA-1).